The sequence spans 871 residues: Probable receptor-like protein kinase At2g21480 (871 aa).

An N-terminal signal peptide occupies residues 1–39 (MEIRKKPNIPMCLVLDSSSRPFMTLLFTILLFLTGLASA). Topologically, residues 40-439 (VGAVGGSPTA…GQRASMGKQG (400 aa)) are extracellular. Asn169, Asn182, Asn253, Asn316, and Asn381 each carry an N-linked (GlcNAc...) asparagine glycan. A helical transmembrane segment spans residues 440-460 (MVATAGFVMMFGAFVGLGAMV). Residues 461 to 871 (YKWKKRPQDW…FTQFASLNGR (411 aa)) are Cytoplasmic-facing. One can recognise a Protein kinase domain in the interval 525 to 797 (FDASEIIGVG…GDVLWNLEYA (273 aa)). ATP-binding positions include 531-539 (IGVGGFGNV) and Lys553. Asp649 acts as the Proton acceptor in catalysis. Positions 808–871 (KAEAEEVETP…FTQFASLNGR (64 aa)) are disordered. Low complexity predominate over residues 817–839 (PKPVAVPAAAPTSPAATTAAASE). The span at 854 to 871 (DQHSGTTMFTQFASLNGR) shows a compositional bias: polar residues.

It belongs to the protein kinase superfamily. Ser/Thr protein kinase family.

It is found in the membrane. This Arabidopsis thaliana (Mouse-ear cress) protein is Probable receptor-like protein kinase At2g21480.